The following is a 562-amino-acid chain: Bifunctional coenzyme A synthase (562 aa).

Residues serine 177 and serine 182 each carry the phosphoserine modification. The tract at residues 179 to 357 is phosphopantetheine adenylyltransferase; it reads VARSAKQPVR…HKRPELPPGC (179 aa). The DPCK domain occupies 359 to 562; sequence VIGLTGISGS…KRISEAPSDP (204 aa). 364-371 serves as a coordination point for ATP; the sequence is GISGSGKS.

The protein in the central section; belongs to the eukaryotic CoaD family. In terms of assembly, monomer. In terms of processing, the N-terminus is blocked.

It localises to the cytoplasm. Its subcellular location is the mitochondrion matrix. It catalyses the reaction (R)-4'-phosphopantetheine + ATP + H(+) = 3'-dephospho-CoA + diphosphate. The catalysed reaction is 3'-dephospho-CoA + ATP = ADP + CoA + H(+). The protein operates within cofactor biosynthesis; coenzyme A biosynthesis; CoA from (R)-pantothenate: step 4/5. It participates in cofactor biosynthesis; coenzyme A biosynthesis; CoA from (R)-pantothenate: step 5/5. Bifunctional enzyme that catalyzes the fourth and fifth sequential steps of CoA biosynthetic pathway. The fourth reaction is catalyzed by the phosphopantetheine adenylyltransferase, coded by the coaD domain; the fifth reaction is catalyzed by the dephospho-CoA kinase, coded by the coaE domain. May act as a point of CoA biosynthesis regulation. The sequence is that of Bifunctional coenzyme A synthase from Sus scrofa (Pig).